Here is a 229-residue protein sequence, read N- to C-terminus: E3 ubiquitin-protein ligase RNF114 (229 aa).

The tract at residues M1–D23 is disordered. The segment at C30–R69 adopts an RING-type zinc-finger fold. Residues C92 and C95 each coordinate Zn(2+). The C2HC RNF-type zinc-finger motif lies at C92–C111. K103 is subject to N6-acetyllysine. Zn(2+)-binding residues include H107 and C111. The residue at position 113 (K113) is an N6-acetyllysine.

In terms of assembly, interacts with XAF1, the interaction increases XAF1 stability and proapoptotic effects, and may regulate IFN signaling. Post-translationally, autoubiquitinated. Polyubiquitinated in the presence of E2 enzymes UBE2D1, UBE2D2 and UBE2D3, but only monoubiquitinated in the presence of UBE2E1.

It localises to the cytoplasm. It is found in the nucleus. It catalyses the reaction S-ubiquitinyl-[E2 ubiquitin-conjugating enzyme]-L-cysteine + [acceptor protein]-L-lysine = [E2 ubiquitin-conjugating enzyme]-L-cysteine + N(6)-ubiquitinyl-[acceptor protein]-L-lysine.. It functions in the pathway protein modification; protein ubiquitination. In terms of biological role, E3 ubiquitin-protein ligase that promotes the ubiquitination of various substrates. In turn, participates in the regulation of many biological processes including cell cycle, apoptosis, osteoclastogenesis as well as innate or adaptive immunity. Acts as negative regulator of NF-kappa-B-dependent transcription by promoting the ubiquitination and stabilization of the NF-kappa-B inhibitor TNFAIP3. May promote the ubiquitination of TRAF6 as well. Also acts as a negative regulator of T-cell activation. Inhibits cellular dsRNA responses and interferon production by targeting MAVS component for proteasomal degradation. Ubiquitinates the CDK inhibitor CDKN1A leading to its degradationand probably also CDKN1B and CDKN1C. This activity stimulates cell cycle G1-to-S phase transition and suppresses cellular senescence. May play a role in spermatogenesis. The sequence is that of E3 ubiquitin-protein ligase RNF114 (Rnf114) from Mus musculus (Mouse).